The sequence spans 357 residues: Probable dual-specificity RNA methyltransferase RlmN (357 aa).

The active-site Proton acceptor is Glu95. Residues 106 to 340 (NRDRHTVCVS…VSVREEKGTD (235 aa)) form the Radical SAM core domain. Cys113 and Cys345 are disulfide-bonded. 3 residues coordinate [4Fe-4S] cluster: Cys120, Cys124, and Cys127. S-adenosyl-L-methionine is bound by residues 172 to 173 (GE), Ser204, 227 to 229 (SLH), and Asn302. Cys345 functions as the S-methylcysteine intermediate in the catalytic mechanism.

The protein belongs to the radical SAM superfamily. RlmN family. The cofactor is [4Fe-4S] cluster.

The protein resides in the cytoplasm. The enzyme catalyses adenosine(2503) in 23S rRNA + 2 reduced [2Fe-2S]-[ferredoxin] + 2 S-adenosyl-L-methionine = 2-methyladenosine(2503) in 23S rRNA + 5'-deoxyadenosine + L-methionine + 2 oxidized [2Fe-2S]-[ferredoxin] + S-adenosyl-L-homocysteine. It catalyses the reaction adenosine(37) in tRNA + 2 reduced [2Fe-2S]-[ferredoxin] + 2 S-adenosyl-L-methionine = 2-methyladenosine(37) in tRNA + 5'-deoxyadenosine + L-methionine + 2 oxidized [2Fe-2S]-[ferredoxin] + S-adenosyl-L-homocysteine. Specifically methylates position 2 of adenine 2503 in 23S rRNA and position 2 of adenine 37 in tRNAs. The chain is Probable dual-specificity RNA methyltransferase RlmN from Desulfitobacterium hafniense (strain Y51).